Consider the following 715-residue polypeptide: Polyribonucleotide nucleotidyltransferase (715 aa).

Mg(2+) is bound by residues aspartate 487 and aspartate 493. The KH domain occupies 554 to 613 (PRLYTFKINPEKIRDVIGKGGAVIRALTEETGTTIDIQDDGTITIAATSGEAAAAARSRI). The region spanning 623–691 (GKIYEGTVLK…DRGRVKLSMK (69 aa)) is the S1 motif domain.

Belongs to the polyribonucleotide nucleotidyltransferase family. Requires Mg(2+) as cofactor.

Its subcellular location is the cytoplasm. It carries out the reaction RNA(n+1) + phosphate = RNA(n) + a ribonucleoside 5'-diphosphate. Involved in mRNA degradation. Catalyzes the phosphorolysis of single-stranded polyribonucleotides processively in the 3'- to 5'-direction. The protein is Polyribonucleotide nucleotidyltransferase of Dechloromonas aromatica (strain RCB).